The primary structure comprises 327 residues: Cobalamin biosynthesis protein CobD (327 aa).

The next 4 membrane-spanning stretches (helical) occupy residues 61–78 (MWLT…GLVI), 80–102 (SILP…ILLA), 160–182 (GIVA…YKFI), and 300–322 (AALV…ASLV).

The protein belongs to the CobD/CbiB family.

Its subcellular location is the cell membrane. The protein operates within cofactor biosynthesis; adenosylcobalamin biosynthesis. In terms of biological role, converts cobyric acid to cobinamide by the addition of aminopropanol on the F carboxylic group. This chain is Cobalamin biosynthesis protein CobD, found in Brucella melitensis biotype 1 (strain ATCC 23456 / CCUG 17765 / NCTC 10094 / 16M).